A 103-amino-acid polypeptide reads, in one-letter code: Defensin-like protein 289 (103 aa).

The signal sequence occupies residues 1 to 29 (MATLKTTIFIIFILYISCTMFVNIFRVQA). 6 cysteine pairs are disulfide-bonded: Cys33–Cys50, Cys39–Cys55, Cys43–Cys57, Cys72–Cys92, Cys78–Cys98, and Cys84–Cys100.

It belongs to the DEFL family.

It localises to the secreted. The sequence is that of Defensin-like protein 289 from Arabidopsis thaliana (Mouse-ear cress).